The following is a 626-amino-acid chain: Endo-1,3(4)-beta-glucanase xgeA (626 aa).

The signal sequence occupies residues 1 to 25 (MSSSLMRRVGSLAASAIIFPGIAHA). The region spanning 33–286 (ESWEGEKILN…WAGGVFGDSG (254 aa)) is the GH16 domain. Asparagine 61 carries N-linked (GlcNAc...) asparagine glycosylation. The active-site Nucleophile is glutamate 142. Glutamate 147 acts as the Proton donor in catalysis. Positions 477–494 (ASTDAAAATTPAAEPHPS) are enriched in low complexity. Residues 477-533 (ASTDAAAATTPAAEPHPSNAETPADSKSSADAVTAQATKTTIAVNTPNPATDSASSV) form a disordered region. Residues 495 to 533 (NAETPADSKSSADAVTAQATKTTIAVNTPNPATDSASSV) are compositionally biased toward polar residues. Glycine 603 carries GPI-anchor amidated glycine lipidation. A propeptide spans 604–626 (VGSKVSISASVAIAAFVMLLLVN) (removed in mature form).

The protein belongs to the glycosyl hydrolase 16 family.

Its subcellular location is the cell membrane. The enzyme catalyses Endohydrolysis of (1-&gt;3)- or (1-&gt;4)-linkages in beta-D-glucans when the glucose residue whose reducing group is involved in the linkage to be hydrolyzed is itself substituted at C-3.. Mixed-linked glucanase involved in the degradation of complex natural cellulosic substrates. Active on laminarin. lichenan, soluble carboxymethyl cellulose but not on pustulan. This Emericella nidulans (strain FGSC A4 / ATCC 38163 / CBS 112.46 / NRRL 194 / M139) (Aspergillus nidulans) protein is Endo-1,3(4)-beta-glucanase xgeA (xgeA).